A 617-amino-acid chain; its full sequence is MSPQRDRINAFYKDNPHPKGSRIVINREHLMIDRPYVLLAVLFVMFLSLIGLLAIAGIRLHRAAIYTAEIHKSLSTNLDVTNSIEHQVKDVLTPLFKIIGDEVGLRTPQRFTDLVKFISDKIKFLNPDREYDFRDLTWCINPPERIKLDYDQYCADVAAEELMNALVNSTLLETRTTNQFLAVSKGNCSGPTTIRGQFSNMSLSLLDLYLGRGYNVSSIVTMTSQGMYGGTYPVEKPNLSSKRSELSQLSMYRVFEVSVIRNPGLGAPVFHMTNYLEQPVSNDLSNCMVALGELKLAALCHGEDSITIPYQGSGKGVSFQLVKLGVWKSPTGMQSWVPLSTDDPVIDRLYLSSHRGVIADNQAKWAVPTTRTDDKLRMETCFQQACKGKIQALCENPECVPLKDNRIPSYGVLSVDLSLTVELKIKIASGFGPLITHGSGMDLYKSNHNNVYWLTIPPMKNLALGVINTLEWIPRFKVSPYLFTVPIKEAGEDCHAPTYLPAEVDGDVKLSSNLVILPGQDLQYVLATYDTSRVEHAVVYYVYSPGRSFSYFYPFRLPIKGVPIELQVECFTWDQKLWCRHFCVLADSESGGHITHSGMVGMGVSCTVTREDGTNRR.

Residues 1-37 lie on the Intravirion side of the membrane; it reads MSPQRDRINAFYKDNPHPKGSRIVINREHLMIDRPYV. Residues 1–154 form a stalk region; the sequence is MSPQRDRINA…RIKLDYDQYC (154 aa). The chain crosses the membrane as a helical; Signal-anchor for type II membrane protein span at residues 38-58; that stretch reads LLAVLFVMFLSLIGLLAIAGI. Residues 59-617 lie on the Virion surface side of the membrane; it reads RLHRAAIYTA…VTREDGTNRR (559 aa). N-linked (GlcNAc...) asparagine; by host glycans are attached at residues Asn168, Asn187, Asn200, Asn215, and Asn238. Cystine bridges form between Cys188–Cys606, Cys287–Cys300, Cys381–Cys494, Cys386–Cys394, and Cys570–Cys579. The segment at 458-543 is interaction with host NECTIN4 receptor; it reads PMKNLALGVI…VEHAVVYYVY (86 aa).

Belongs to the paramyxoviruses hemagglutinin-neuraminidase family. Non-sialidase subfamily. In terms of assembly, homodimer; disulfide-linked. Further forms homotetramer (dimer of dimers). Interacts (via C-terminus) with human NECTIN4 (via N-terminus); this interaction allows attachment to the respiratory epithelium and viral entry. Interacts (via C-terminus) with human SLAMF1/CD150 (via N-terminus); this interaction allows attachment and viral entry into the CD150-expressing immune cells. Interacts with human CD46 antigen; this interaction allows attachment and viral entry of vaccine and laboratory-adapted strains.

It localises to the virion membrane. It is found in the host cell membrane. In terms of biological role, attaches the virus to the human SLAMF1/CD150 receptor for entry into host dendritic cells, macrophages, activated memory T cells and naive or memory B cells, thereby explaining the long immunosuppression that follows infection. In the respiratory airways, binds to the NECTIN4 receptor for entry into the host cell. Binding of H protein to the receptor induces a conformational change that allows the F protein to trigger virion/cell membranes fusion. The vaccine and laboratory-adapted strains use host CD46 as an alternate receptor. The high degree of interaction between H and CD46 results in down-regulation of the latter from the surface of infected cells, rendering them more sensitive to c3b-mediated complement lysis. This is Hemagglutinin glycoprotein (H) from Homo sapiens (Human).